The chain runs to 147 residues: D-aminoacyl-tRNA deacylase (147 aa).

The Gly-cisPro motif, important for rejection of L-amino acids motif lies at 136–137 (GP).

It belongs to the DTD family. In terms of assembly, homodimer.

The protein resides in the cytoplasm. The enzyme catalyses glycyl-tRNA(Ala) + H2O = tRNA(Ala) + glycine + H(+). It carries out the reaction a D-aminoacyl-tRNA + H2O = a tRNA + a D-alpha-amino acid + H(+). Functionally, an aminoacyl-tRNA editing enzyme that deacylates mischarged D-aminoacyl-tRNAs. Also deacylates mischarged glycyl-tRNA(Ala), protecting cells against glycine mischarging by AlaRS. Acts via tRNA-based rather than protein-based catalysis; rejects L-amino acids rather than detecting D-amino acids in the active site. By recycling D-aminoacyl-tRNA to D-amino acids and free tRNA molecules, this enzyme counteracts the toxicity associated with the formation of D-aminoacyl-tRNA entities in vivo and helps enforce protein L-homochirality. The protein is D-aminoacyl-tRNA deacylase of Streptococcus agalactiae serotype III (strain NEM316).